The sequence spans 476 residues: Bifunctional protein HldE (476 aa).

The tract at residues 1 to 318 (MAQYSAEFKQ…ENAIHARPET (318 aa)) is ribokinase. An ATP-binding site is contributed by 195 to 198 (NMSE). Residue D264 is part of the active site. The segment at 344–476 (MTNGCFDILH…VIEKIKLLKD (133 aa)) is cytidylyltransferase.

In the N-terminal section; belongs to the carbohydrate kinase PfkB family. The protein in the C-terminal section; belongs to the cytidylyltransferase family. In terms of assembly, homodimer.

It carries out the reaction D-glycero-beta-D-manno-heptose 7-phosphate + ATP = D-glycero-beta-D-manno-heptose 1,7-bisphosphate + ADP + H(+). The enzyme catalyses D-glycero-beta-D-manno-heptose 1-phosphate + ATP + H(+) = ADP-D-glycero-beta-D-manno-heptose + diphosphate. Its pathway is nucleotide-sugar biosynthesis; ADP-L-glycero-beta-D-manno-heptose biosynthesis; ADP-L-glycero-beta-D-manno-heptose from D-glycero-beta-D-manno-heptose 7-phosphate: step 1/4. The protein operates within nucleotide-sugar biosynthesis; ADP-L-glycero-beta-D-manno-heptose biosynthesis; ADP-L-glycero-beta-D-manno-heptose from D-glycero-beta-D-manno-heptose 7-phosphate: step 3/4. It functions in the pathway bacterial outer membrane biogenesis; LOS core biosynthesis. Its function is as follows. Catalyzes the phosphorylation of D-glycero-D-manno-heptose 7-phosphate at the C-1 position to selectively form D-glycero-beta-D-manno-heptose-1,7-bisphosphate. In terms of biological role, catalyzes the ADP transfer from ATP to D-glycero-beta-D-manno-heptose 1-phosphate, yielding ADP-D-glycero-beta-D-manno-heptose. The polypeptide is Bifunctional protein HldE (Haemophilus influenzae (strain ATCC 51907 / DSM 11121 / KW20 / Rd)).